The sequence spans 326 residues: N-acetyl-gamma-glutamyl-phosphate reductase (326 aa).

Residue Cys-155 is part of the active site.

This sequence belongs to the NAGSA dehydrogenase family. Type 1 subfamily.

The protein resides in the cytoplasm. The enzyme catalyses N-acetyl-L-glutamate 5-semialdehyde + phosphate + NADP(+) = N-acetyl-L-glutamyl 5-phosphate + NADPH + H(+). Its pathway is amino-acid biosynthesis; L-arginine biosynthesis; N(2)-acetyl-L-ornithine from L-glutamate: step 3/4. Functionally, catalyzes the NADPH-dependent reduction of N-acetyl-5-glutamyl phosphate to yield N-acetyl-L-glutamate 5-semialdehyde. The protein is N-acetyl-gamma-glutamyl-phosphate reductase of Shewanella woodyi (strain ATCC 51908 / MS32).